The primary structure comprises 322 residues: Prephenate dehydratase (322 aa).

In terms of domain architecture, Prephenate dehydratase spans 5–191 (RIAYLGPEGT…ARTRFVLVGM (187 aa)). One can recognise an ACT domain in the interval 205-282 (SAVLRIDNAP…ADVCYLGSWP (78 aa)). Positions 286–322 (ATGPTVSPPPPDEASRWLARLRAGKPDQASEPGGGKL) are disordered.

As to quaternary structure, homodimer.

The enzyme catalyses prephenate + H(+) = 3-phenylpyruvate + CO2 + H2O. Its pathway is amino-acid biosynthesis; L-phenylalanine biosynthesis; phenylpyruvate from prephenate: step 1/1. The polypeptide is Prephenate dehydratase (pheA) (Mycobacterium leprae (strain Br4923)).